Reading from the N-terminus, the 408-residue chain is Imidazolonepropionase (408 aa).

Residues H73 and H75 each coordinate Fe(3+). H73 and H75 together coordinate Zn(2+). 4-imidazolone-5-propanoate is bound by residues R82, Y145, and H178. Y145 contacts N-formimidoyl-L-glutamate. Position 243 (H243) interacts with Fe(3+). H243 is a binding site for Zn(2+). Q246 is a 4-imidazolone-5-propanoate binding site. Fe(3+) is bound at residue D318. D318 provides a ligand contact to Zn(2+). Residues N320 and G322 each coordinate N-formimidoyl-L-glutamate. S323 contributes to the 4-imidazolone-5-propanoate binding site.

It belongs to the metallo-dependent hydrolases superfamily. HutI family. Zn(2+) serves as cofactor. The cofactor is Fe(3+).

The protein localises to the cytoplasm. The enzyme catalyses 4-imidazolone-5-propanoate + H2O = N-formimidoyl-L-glutamate. It functions in the pathway amino-acid degradation; L-histidine degradation into L-glutamate; N-formimidoyl-L-glutamate from L-histidine: step 3/3. In terms of biological role, catalyzes the hydrolytic cleavage of the carbon-nitrogen bond in imidazolone-5-propanoate to yield N-formimidoyl-L-glutamate. It is the third step in the universal histidine degradation pathway. The protein is Imidazolonepropionase of Shewanella baltica (strain OS185).